We begin with the raw amino-acid sequence, 263 residues long: Chymotrypsinogen 2 (263 aa).

The N-terminal stretch at 1 to 18 (MAFLWLLSCFALLGTAFG) is a signal peptide. 5 disulfides stabilise this stretch: C19–C140, C60–C76, C154–C219, C186–C200, and C209–C238. Residues 34 to 261 (IVNGEDAVPG…LIPWVQQILQ (228 aa)) enclose the Peptidase S1 domain. H75 acts as the Charge relay system in catalysis. S93 is subject to Phosphoserine. D120 (charge relay system) is an active-site residue. S213 (charge relay system) is an active-site residue.

It belongs to the peptidase S1 family.

It localises to the secreted. The protein resides in the extracellular space. It catalyses the reaction Preferential cleavage: Tyr-|-Xaa, Trp-|-Xaa, Phe-|-Xaa, Leu-|-Xaa.. This chain is Chymotrypsinogen 2 (CTRB1), found in Canis lupus familiaris (Dog).